Consider the following 372-residue polypeptide: DNA damage-repair/toleration protein DRT100 (372 aa).

The signal sequence occupies residues 1 to 26 (MRKLLASPFSSLLAVVFISVISVVRC). LRR repeat units follow at residues 136 to 158 (SLRILDLAGNKITGEIPAEIGKL), 160 to 183 (KLAVLNLAENQMSGEIPASLTSLI), 184 to 205 (ELKHLELTENGITGVIPADFGS), 208 to 230 (MLSRVLLGRNELTGSIPESISGM), 232 to 254 (RLADLDLSKNHIEGPIPEWMGNM), 256 to 277 (VLSLLNLDCNSLTGPIPGSLLS), 280 to 302 (GLDVANLSRNALEGTIPDVFGSK), 304 to 326 (YLVSLDLSHNSLSGRIPDSLSSA), and 328 to 350 (FVGHLDISHNKLCGRIPTGFPFD).

This protein is able to complement bacterial recA mutations, but its native function in the plant is not known. The polypeptide is DNA damage-repair/toleration protein DRT100 (DRT100) (Arabidopsis thaliana (Mouse-ear cress)).